A 958-amino-acid polypeptide reads, in one-letter code: Protein translocase subunit SecA (958 aa).

ATP-binding positions include Gln-87, 105–109, and Asp-524; that span reads GEGKT. The tract at residues 598 to 617 is disordered; that stretch reads RRIDNQLRGRSGRQGDPGRS. Positions 939, 941, 950, and 951 each coordinate Zn(2+).

It belongs to the SecA family. Monomer and homodimer. Part of the essential Sec protein translocation apparatus which comprises SecA, SecYEG and auxiliary proteins SecDF-YajC and YidC. Zn(2+) is required as a cofactor.

The protein resides in the cell inner membrane. The protein localises to the cytoplasm. The catalysed reaction is ATP + H2O + cellular proteinSide 1 = ADP + phosphate + cellular proteinSide 2.. Its function is as follows. Part of the Sec protein translocase complex. Interacts with the SecYEG preprotein conducting channel. Has a central role in coupling the hydrolysis of ATP to the transfer of proteins into and across the cell membrane, serving both as a receptor for the preprotein-SecB complex and as an ATP-driven molecular motor driving the stepwise translocation of polypeptide chains across the membrane. This Methylobacterium sp. (strain 4-46) protein is Protein translocase subunit SecA.